The sequence spans 149 residues: Large ribosomal subunit protein uL15 (149 aa).

The disordered stretch occupies residues Gly-30–Gln-63. Residues Gly-36–Gly-49 are compositionally biased toward basic residues.

Belongs to the universal ribosomal protein uL15 family. As to quaternary structure, part of the 50S ribosomal subunit.

In terms of biological role, binds to the 23S rRNA. In Xylella fastidiosa (strain 9a5c), this protein is Large ribosomal subunit protein uL15.